The following is a 399-amino-acid chain: Enoyl-[acyl-carrier-protein] reductase [NADH] 2 (399 aa).

NAD(+) is bound by residues 48–53 (GASSGF), 75–76 (FE), 112–113 (DA), and 141–142 (LA). Y227 serves as a coordination point for substrate. Y237 functions as the Proton donor in the catalytic mechanism. NAD(+)-binding positions include K246 and 275-277 (LVT).

Belongs to the TER reductase family. In terms of assembly, monomer.

The catalysed reaction is a 2,3-saturated acyl-[ACP] + NAD(+) = a (2E)-enoyl-[ACP] + NADH + H(+). The protein operates within lipid metabolism; fatty acid biosynthesis. Functionally, involved in the final reduction of the elongation cycle of fatty acid synthesis (FAS II). Catalyzes the reduction of a carbon-carbon double bond in an enoyl moiety that is covalently linked to an acyl carrier protein (ACP). This chain is Enoyl-[acyl-carrier-protein] reductase [NADH] 2, found in Vibrio parahaemolyticus serotype O3:K6 (strain RIMD 2210633).